The chain runs to 598 residues: Arginine--tRNA ligase (598 aa).

Positions 131 to 141 match the 'HIGH' region motif; it reads ANPTGPMHVGH. The interval 288 to 309 is disordered; it reads KLPPPKSKKGQPPPQAQPDEEG.

It belongs to the class-I aminoacyl-tRNA synthetase family. As to quaternary structure, monomer.

The protein resides in the cytoplasm. It carries out the reaction tRNA(Arg) + L-arginine + ATP = L-arginyl-tRNA(Arg) + AMP + diphosphate. The protein is Arginine--tRNA ligase of Anaeromyxobacter dehalogenans (strain 2CP-C).